Consider the following 2159-residue polypeptide: ATP-binding cassette sub-family A member 7 (2159 aa).

The chain crosses the membrane as a helical span at residues 22 to 42 (PIQLLVELLWPLFLFFILVAV). At 43 to 546 (RHSHPPLEHH…DVFLRVLSRS (504 aa)) the chain is on the extracellular side. A disulfide bridge links cysteine 75 with cysteine 222. Asparagine 309 carries N-linked (GlcNAc...) asparagine glycosylation. Transmembrane regions (helical) follow at residues 547 to 567 (LPLF…KAVV), 590 to 610 (LGWF…LVLV), 623 to 643 (VVIF…SFLL), 652 to 672 (LAAA…VLCV), 678 to 698 (LHLG…GFGC), and 732 to 752 (AFLL…EAVC). In terms of domain architecture, ABC transporter 1 spans 804-1035 (VSIRGLKKHF…LGCGYYLTLV (232 aa)). ATP is bound at residue 838–845 (GHNGAGKT). The helical transmembrane segment at 846-866 (TTLSILSGLFPPSSGSASILG) threads the bilayer. Disordered regions lie at residues 1042-1088 (VTHD…GAVP) and 1172-1192 (GGDS…PTGP). Basic and acidic residues predominate over residues 1044–1061 (HDAKGDSEDPRREKKSDG). Positions 1062 to 1081 (NGRTSDTAFTRGTSDKSNQA) are enriched in polar residues. Residues 1246–1266 (VVLPALFVGLALFFSLIVPPF) traverse the membrane as a helical segment. Residues 1267–1551 (GQYPPLQLSP…TLIASSVDVL (285 aa)) lie on the Extracellular side of the membrane. Cysteine 1359 and cysteine 1373 are joined by a disulfide. 5 helical membrane passes run 1552–1572 (VSIC…LVLI), 1598–1618 (FLWD…IFLA), 1635–1655 (LLLL…SFFF), 1663–1683 (VVLT…TFVL), and 1743–1763 (IIGK…LITL). One can recognise an ABC transporter 2 domain in the interval 1807-2039 (LVLRDLTKVY…FGAGHTLTLR (233 aa)). Residue 1841–1848 (GVNGAGKT) coordinates ATP. The disordered stretch occupies residues 2118–2159 (QGEEEESSRQEAEEEEVSKPGRQHPKRVSRFLEDPSSVETMI). Positions 2119–2133 (GEEEESSRQEAEEEE) are enriched in acidic residues.

The protein belongs to the ABC transporter superfamily. ABCA family. In terms of processing, N-glycosylated. As to expression, widely expressed with higher expression in brain, lung, adrenal gland, spleen and hematopoietic tissues (at protein level). In the brain, expressed in cortex, cerebellum, hippocampus, olfactory bulb, neurons, astrocytes and microglia (at protein level). Also expressed in adipocytes and macrophages (at protein level). Expressed in thymocytes (at protein level). Highly expressed in spleen and hematopoietic tissues. Expressed in brain, lung, macrophages, microglia, oligodendrocytes and neurons.

Its subcellular location is the cell membrane. The protein localises to the golgi apparatus membrane. It localises to the early endosome membrane. The protein resides in the cytoplasm. It is found in the cell projection. Its subcellular location is the ruffle membrane. The protein localises to the phagocytic cup. Its function is as follows. Probable ATP-binding cassette (ABC) transporter that plays a role in lipid homeostasis and macrophage-mediated phagocytosis. Binds APOA1 and may function in apolipoprotein-mediated phospholipid efflux from cells. May also mediate cholesterol efflux. May regulate cellular ceramide homeostasis during keratinocyte differentiation. Involved in lipid raft organization and CD1D localization on thymocytes and antigen-presenting cells, which plays an important role in natural killer T-cell development and activation. Plays a role in phagocytosis of apoptotic cells by macrophages. Macrophage phagocytosis is stimulated by APOA1 or APOA2, probably by stabilization of ABCA7. Also involved in phagocytic clearance of amyloid-beta by microglia cells and macrophages. Further limits amyloid-beta production by playing a role in the regulation of amyloid-beta A4 precursor protein (APP) endocytosis and/or processing. This Mus musculus (Mouse) protein is ATP-binding cassette sub-family A member 7 (Abca7).